Here is a 334-residue protein sequence, read N- to C-terminus: 4-hydroxy-2-methyl-3-oxo-4-farnesyl-3,4-dihydroquinoline-1-oxide ketoreductase (334 aa).

Tyrosine 139 functions as the Proton donor in the catalytic mechanism.

It belongs to the 3-beta-HSD family.

It catalyses the reaction aurachin B + NAD(+) + H2O = 4-hydroxy-2-methyl-3-oxo-4-[(2E,6E)-farnesyl]-3,4-dihydroquinoline 1-oxide + NADH. The enzyme catalyses 3,4-dihydroxy-2-methyl-4-[(2E,6E)-farnesyl]-3,4-dihydroquinoline 1-oxide + NAD(+) = 4-hydroxy-2-methyl-3-oxo-4-[(2E,6E)-farnesyl]-3,4-dihydroquinoline 1-oxide + NADH + H(+). Functionally, ketoreductase that catalyzes the final step in the conversion of aurachin C to aurachin B. Catalyzes the reduction of 4-hydroxy-2-methyl-3-oxo-4-[(2E,6E)-farnesyl]-3,4-dihydroquinoline-1-oxide to form 3,4-dihydroxy-2-methyl-4-[(2E,6E)-farnesyl]-3,4-dihydroquinoline 1-oxide, which then undergoes a spontaneous dehydration to form aurachin B. Accepts both NADH and NADPH, but has a preference for NADH. The protein is 4-hydroxy-2-methyl-3-oxo-4-farnesyl-3,4-dihydroquinoline-1-oxide ketoreductase of Stigmatella aurantiaca.